The primary structure comprises 422 residues: Phosphoribosylamine--glycine ligase (422 aa).

An ATP-grasp domain is found at 107-314 (KAFMQRHGIP…LFDVLDRAID (208 aa)). 133-194 (VDREGAPIVI…EEFLAGEEAS (62 aa)) contributes to the ATP binding site. Residues glutamate 284 and asparagine 286 each coordinate Mg(2+).

This sequence belongs to the GARS family. Requires Mg(2+) as cofactor. The cofactor is Mn(2+).

It catalyses the reaction 5-phospho-beta-D-ribosylamine + glycine + ATP = N(1)-(5-phospho-beta-D-ribosyl)glycinamide + ADP + phosphate + H(+). It functions in the pathway purine metabolism; IMP biosynthesis via de novo pathway; N(1)-(5-phospho-D-ribosyl)glycinamide from 5-phospho-alpha-D-ribose 1-diphosphate: step 2/2. This is Phosphoribosylamine--glycine ligase from Ralstonia nicotianae (strain ATCC BAA-1114 / GMI1000) (Ralstonia solanacearum).